Consider the following 193-residue polypeptide: Phosphoheptose isomerase (193 aa).

An SIS domain is found at 37–193 (LADSFKAGGK…MLIEKEMAKG (157 aa)). 52 to 54 (NGG) contacts substrate. Zn(2+)-binding residues include H61 and E65. Substrate contacts are provided by residues E65, 93-94 (ND), 119-121 (STS), S124, and Q172. Q172 and H180 together coordinate Zn(2+).

The protein belongs to the SIS family. GmhA subfamily. In terms of assembly, homotetramer. Requires Zn(2+) as cofactor.

It localises to the cytoplasm. The enzyme catalyses 2 D-sedoheptulose 7-phosphate = D-glycero-alpha-D-manno-heptose 7-phosphate + D-glycero-beta-D-manno-heptose 7-phosphate. The protein operates within carbohydrate biosynthesis; D-glycero-D-manno-heptose 7-phosphate biosynthesis; D-glycero-alpha-D-manno-heptose 7-phosphate and D-glycero-beta-D-manno-heptose 7-phosphate from sedoheptulose 7-phosphate: step 1/1. Its function is as follows. Catalyzes the isomerization of sedoheptulose 7-phosphate in D-glycero-D-manno-heptose 7-phosphate. This chain is Phosphoheptose isomerase, found in Klebsiella pneumoniae subsp. pneumoniae (strain ATCC 700721 / MGH 78578).